Here is a 341-residue protein sequence, read N- to C-terminus: DNA-directed RNA polymerase subunit alpha (341 aa).

Residues 1–233 form an alpha N-terminal domain (alpha-NTD) region; sequence MVREEVPVST…DLFIPFLHAE (233 aa). Residues 266-341 are alpha C-terminal domain (alpha-CTD); sequence IILKRIFIDQ…LKNSNQFESR (76 aa).

Belongs to the RNA polymerase alpha chain family. In plastids the minimal PEP RNA polymerase catalytic core is composed of four subunits: alpha, beta, beta', and beta''. When a (nuclear-encoded) sigma factor is associated with the core the holoenzyme is formed, which can initiate transcription.

It is found in the plastid. Its subcellular location is the chloroplast. The catalysed reaction is RNA(n) + a ribonucleoside 5'-triphosphate = RNA(n+1) + diphosphate. Functionally, DNA-dependent RNA polymerase catalyzes the transcription of DNA into RNA using the four ribonucleoside triphosphates as substrates. This chain is DNA-directed RNA polymerase subunit alpha, found in Nymphaea alba (White water-lily).